Consider the following 188-residue polypeptide: MASPAGNITFEDYLGLNAALFEWADSYDSKDWDRLRKCIAPELRIDYRSFLDKIWEAMPAEEFIAMISDKSVLGNPLLKTQHFIGGSRWEKVSDTEVIGHHQLRVPHQKYTDASRTEVAVKGHAHSYNMHWYRKVNGVWKFAGLNPEIRWSEYDFDAVFADGRDSYGTEDQKTDVKVVEKEIKFAAAH.

Substrate is bound by residues Tyr27, Tyr47, and Phe50. Active-site residues include His82 and His107. Residue Asn128 participates in substrate binding.

The protein belongs to the scytalone dehydratase family. Homotrimer. Each subunit contains an active site, located in the central part of the hydrophobic core of the monomer, which functions independently.

It localises to the endosome. It carries out the reaction scytalone = 1,3,8-trihydroxynaphthalene + H2O. It functions in the pathway pigment biosynthesis; melanin biosynthesis. Carpropamid acts as an efficient inhibitor of scytalone dehydratase activity. In terms of biological role, scytalone dehydratase; part of the gene cluster that mediates the biosynthesis of dihydroxynaphthalene (DHN)-melanin, a bluish-green pigment and a structural component of the conidial wall. Within the pathway, catalyzes the dehydration of scytalone as well as of vermelone. The polypeptide is Scytalone dehydratase (Colletotrichum orbiculare (strain 104-T / ATCC 96160 / CBS 514.97 / LARS 414 / MAFF 240422) (Cucumber anthracnose fungus)).